The chain runs to 103 residues: DNA-binding protein TRF1 (103 aa).

In terms of biological role, DNA-binding protein that recognizes the inverted terminal repeats of the pGKl linear DNA plasmids. The polypeptide is DNA-binding protein TRF1 (TRF1) (Kluyveromyces lactis (strain ATCC 8585 / CBS 2359 / DSM 70799 / NBRC 1267 / NRRL Y-1140 / WM37) (Yeast)).